The sequence spans 420 residues: Glucose-1-phosphate adenylyltransferase (420 aa).

Alpha-D-glucose 1-phosphate is bound by residues tyrosine 107, glycine 172, 187–188, and serine 205; that span reads EK.

It belongs to the bacterial/plant glucose-1-phosphate adenylyltransferase family. Homotetramer.

It carries out the reaction alpha-D-glucose 1-phosphate + ATP + H(+) = ADP-alpha-D-glucose + diphosphate. It participates in glycan biosynthesis; glycogen biosynthesis. Its function is as follows. Involved in the biosynthesis of ADP-glucose, a building block required for the elongation reactions to produce glycogen. Catalyzes the reaction between ATP and alpha-D-glucose 1-phosphate (G1P) to produce pyrophosphate and ADP-Glc. This Rhizobium radiobacter (Agrobacterium tumefaciens) protein is Glucose-1-phosphate adenylyltransferase.